An 882-amino-acid chain; its full sequence is Alanine--tRNA ligase (882 aa).

Residues His571, His575, Cys673, and His677 each coordinate Zn(2+).

It belongs to the class-II aminoacyl-tRNA synthetase family. Zn(2+) is required as a cofactor.

The protein resides in the cytoplasm. The catalysed reaction is tRNA(Ala) + L-alanine + ATP = L-alanyl-tRNA(Ala) + AMP + diphosphate. Catalyzes the attachment of alanine to tRNA(Ala) in a two-step reaction: alanine is first activated by ATP to form Ala-AMP and then transferred to the acceptor end of tRNA(Ala). Also edits incorrectly charged Ser-tRNA(Ala) and Gly-tRNA(Ala) via its editing domain. The chain is Alanine--tRNA ligase from Desulfotalea psychrophila (strain LSv54 / DSM 12343).